Consider the following 500-residue polypeptide: Phenylalanine--tRNA ligase alpha subunit (500 aa).

Residues threonine 343, glutamine 382 to aspartate 384, and phenylalanine 423 each bind L-phenylalanine. Mg(2+) is bound at residue glutamate 425. L-phenylalanine is bound at residue phenylalanine 448.

The protein belongs to the class-II aminoacyl-tRNA synthetase family. Phe-tRNA synthetase alpha subunit type 2 subfamily. In terms of assembly, tetramer of two alpha and two beta subunits. Mg(2+) serves as cofactor.

It is found in the cytoplasm. The enzyme catalyses tRNA(Phe) + L-phenylalanine + ATP = L-phenylalanyl-tRNA(Phe) + AMP + diphosphate + H(+). The sequence is that of Phenylalanine--tRNA ligase alpha subunit from Pyrococcus abyssi (strain GE5 / Orsay).